Reading from the N-terminus, the 233-residue chain is uncharacterized protein (233 aa).

Disordered regions lie at residues 1-159 (MGKH…NEKL) and 181-206 (MGVK…QDKM). Residues 36 to 115 (RDRSRSPHKE…RRDDKNRLSA (80 aa)) show a composition bias toward basic and acidic residues. The segment covering 135–148 (SSSSNTTDTASSSS) has biased composition (low complexity). The span at 189 to 206 (PTDDSSRLSDEKNRQDKM) shows a compositional bias: basic and acidic residues.

This is an uncharacterized protein from Caenorhabditis elegans.